The primary structure comprises 1312 residues: AT-rich interactive domain-containing protein 4B (1312 aa).

Disordered stretches follow at residues 124-166 and 266-306; these read PLTN…EDDR and KTEL…EPFP. Residues Ser-276, Ser-295, and Ser-296 each carry the phosphoserine modification. Acidic residues predominate over residues 277–305; it reads EAEEEEEEEDDEKEKEDNSSEEEEEIEPF. Residues 306–398 enclose the ARID domain; the sequence is PEERENFLQQ…YLYGFEEYCR (93 aa). Residues Lys-429, Lys-440, and Lys-462 each participate in a glycyl lysine isopeptide (Lys-Gly) (interchain with G-Cter in SUMO2) cross-link. Disordered regions lie at residues 458–577, 635–680, 708–894, 909–1212, and 1252–1288; these read EIER…KVQV, IKHR…EMVS, QASE…TTGF, LNNS…NRLP, and SEVASIDRRRKRLKKKERESAATSSSSSSPSSSSITA. The tract at residues 465–473 is antigenic epitope; sequence IKPSLGSKK. Phosphoserine is present on Ser-483. Residues 483–496 show a composition bias toward basic and acidic residues; that stretch reads SDQEKEVNIKKPED. Residue Lys-517 forms a Glycyl lysine isopeptide (Lys-Gly) (interchain with G-Cter in SUMO2) linkage. The segment covering 532–567 has biased composition (acidic residues); the sequence is NKEEDEDDEEAEEEEEEEEEEEDEDDDDNNEEEEFE. The Tudor-knot domain maps to 572–624; it reads GMKVQVRYGRGKNQKMYEASIKDSDVEGGEVLYLVHYCGWNVRYDEWIKADKI. Positions 643 to 656 are enriched in basic and acidic residues; the sequence is NKLDKEKDKDEKYS. A phosphoserine mark is found at Ser-666, Ser-675, and Ser-717. Basic and acidic residues-rich tracts occupy residues 722–754 and 778–787; these read ERGAQDMDNNGKEESKIDHLTNNRNDLISKEEQ and SPERLRKDIE. Positions 728-754 form a coiled coil; the sequence is MDNNGKEESKIDHLTNNRNDLISKEEQ. Residue Lys-751 forms a Glycyl lysine isopeptide (Lys-Gly) (interchain with G-Cter in SUMO2) linkage. Phosphoserine is present on residues Ser-778 and Ser-790. Residues 788–799 show a composition bias toward acidic residues; the sequence is VLSEDTDYEEDE. Phosphothreonine is present on Thr-793. Composition is skewed to basic and acidic residues over residues 807–816, 828–852, 909–927, and 995–1010; these read VKKDTTDKSS, CNTEECLKTGSPGKKEEKAKNKESL, LNNSDERLQNSRAKDRKDV, and KPIEEKTVEVNDRKAE. Ser-1014 carries the phosphoserine modification. Position 1026 is a phosphothreonine (Thr-1026). Residues 1028-1037 are compositionally biased toward low complexity; that stretch reads ESPSSVTVTE. Ser-1029 carries the phosphoserine modification. A compositionally biased stretch (polar residues) spans 1038–1047; sequence GSRQQSSVTV. Positions 1056–1065 are enriched in basic and acidic residues; that stretch reads EEVRSIKSET. A compositionally biased stretch (low complexity) spans 1087 to 1101; the sequence is SSPAGFDASVSSSSS. An antigenic epitope region spans residues 1130–1137; the sequence is KKQKRSHK. The segment covering 1130-1148 has biased composition (basic residues); the sequence is KKQKRSHKATVVNNKKKGK. Phosphothreonine is present on Thr-1150. Residues Ser-1152, Ser-1153, Ser-1155, and Ser-1159 each carry the phosphoserine modification. The span at 1162–1191 shows a compositional bias: polar residues; it reads ESITKSQPVKSVSTGMKSHSTKSPARTQSP. Residues 1196-1208 show a composition bias toward basic and acidic residues; that stretch reads KNGDKDPDLKEPS. Residues 1231–1270 adopt a coiled-coil conformation; it reads ERITILQEKLQEIRKHYLSLKSEVASIDRRRKRLKKKERE. The span at 1272 to 1288 shows a compositional bias: low complexity; the sequence is AATSSSSSSPSSSSITA.

Component of a Sin3A corepressor complex consisting of SIN3A, SAP130, SUDS3/SAP45, SAP180, HDAC1 and HDAC2. Interacts with ARID4A. Interacts with AR. Highly expressed in the testis and in breast, lung, colon, pancreatic and ovarian cancers. Expressed at low levels in the thymus, prostate and ovary.

Its subcellular location is the nucleus. It is found in the cytoplasm. Acts as a transcriptional repressor. May function in the assembly and/or enzymatic activity of the Sin3A corepressor complex or in mediating interactions between the complex and other regulatory complexes. Plays a role in the regulation of epigenetic modifications at the PWS/AS imprinting center near the SNRPN promoter, where it might function as part of a complex with RB1 and ARID4A. Involved in spermatogenesis, together with ARID4A, where it functions as a transcriptional coactivator for AR (androgen receptor) and enhances expression of genes required for sperm maturation. Regulates expression of the tight junction protein CLDN3 in the testis, which is important for integrity of the blood-testis barrier. Plays a role in myeloid homeostasis where it regulates the histone methylation state of bone marrow cells and expression of various genes involved in hematopoiesis. May function as a leukemia suppressor. In Homo sapiens (Human), this protein is AT-rich interactive domain-containing protein 4B (ARID4B).